We begin with the raw amino-acid sequence, 222 residues long: DnaJ homolog subfamily B member 9 (222 aa).

The N-terminal stretch at 1-23 (MATPQSVFVFAICILMITELILA) is a signal peptide. The J domain occupies 26 to 90 (SYYDILGVPK…NSRKEYDTIG (65 aa)). The tract at residues 91-222 (HSAFTNGKGQ…VTTYTDCSGQ (132 aa)) is divergent targeting domain. Residue Ser-133 is modified to Phosphoserine.

Interacts with HSPA5/BiP; interaction is direct. Interacts with ERN1/IRE1 (via the luminal region). Interacts with DERL1. In terms of processing, not N-glycosylated.

The protein resides in the endoplasmic reticulum lumen. In terms of biological role, co-chaperone for Hsp70 protein HSPA5/BiP that acts as a key repressor of the ERN1/IRE1-mediated unfolded protein response (UPR). J domain-containing co-chaperones stimulate the ATPase activity of Hsp70 proteins and are required for efficient substrate recognition by Hsp70 proteins. In the unstressed endoplasmic reticulum, interacts with the luminal region of ERN1/IRE1 and selectively recruits HSPA5/BiP: HSPA5/BiP disrupts the dimerization of the active ERN1/IRE1 luminal region, thereby inactivating ERN1/IRE1. Also involved in endoplasmic reticulum-associated degradation (ERAD) of misfolded proteins. Required for survival of B-cell progenitors and normal antibody production. The sequence is that of DnaJ homolog subfamily B member 9 from Mus musculus (Mouse).